A 321-amino-acid chain; its full sequence is Tetraketide alpha-pyrone reductase 2 (321 aa).

An N-acetylserine modification is found at Ser-2. Residues 4–28 (YLVT…GHTV), Lys-40, and Tyr-160 each bind NADP(+).

It belongs to the NAD(P)-dependent epimerase/dehydratase family. Dihydroflavonol-4-reductase subfamily.

It is found in the cytoplasm. Its function is as follows. May be involved in the biosynthesis of hydroxylated tetraketide compounds that serve as sporopollenin precursors (the main constituents of exine). Acts on tetraketide alpha-pyrones and reduces the carbonyl function on the tetraketide alkyl chain to a secondary alcohol function. This chain is Tetraketide alpha-pyrone reductase 2 (TKPR2), found in Arabidopsis thaliana (Mouse-ear cress).